A 502-amino-acid chain; its full sequence is Lysine--tRNA ligase (502 aa).

The Mg(2+) site is built by Glu410 and Glu417.

This sequence belongs to the class-II aminoacyl-tRNA synthetase family. Homodimer. Requires Mg(2+) as cofactor.

It localises to the cytoplasm. The catalysed reaction is tRNA(Lys) + L-lysine + ATP = L-lysyl-tRNA(Lys) + AMP + diphosphate. This Photobacterium profundum (strain SS9) protein is Lysine--tRNA ligase.